A 394-amino-acid polypeptide reads, in one-letter code: Elongation factor Tu (394 aa).

The tr-type G domain maps to 10 to 204 (KPHVNIGTIG…AVDSWIPLPE (195 aa)). The segment at 19–26 (GHVDHGKT) is G1. 19–26 (GHVDHGKT) is a GTP binding site. Mg(2+) is bound at residue Thr26. Residues 60–64 (GITIN) are G2. The interval 81–84 (DCPG) is G3. GTP contacts are provided by residues 81–85 (DCPGH) and 136–139 (NKCD). The tract at residues 136 to 139 (NKCD) is G4. The tract at residues 174–176 (SGL) is G5.

It belongs to the TRAFAC class translation factor GTPase superfamily. Classic translation factor GTPase family. EF-Tu/EF-1A subfamily. In terms of assembly, monomer.

The protein resides in the cytoplasm. The catalysed reaction is GTP + H2O = GDP + phosphate + H(+). Its function is as follows. GTP hydrolase that promotes the GTP-dependent binding of aminoacyl-tRNA to the A-site of ribosomes during protein biosynthesis. The chain is Elongation factor Tu from Ureaplasma urealyticum serovar 10 (strain ATCC 33699 / Western).